The primary structure comprises 364 residues: sn-glycerol-3-phosphate import ATP-binding protein UgpC (364 aa).

One can recognise an ABC transporter domain in the interval 4–235 (VVLRNVRKTY…PATTFVASFI (232 aa)). 37 to 44 (GPSGCGKS) provides a ligand contact to ATP.

This sequence belongs to the ABC transporter superfamily. sn-glycerol-3-phosphate importer (TC 3.A.1.1.3) family. The complex is composed of two ATP-binding proteins (UgpC), two transmembrane proteins (UgpA and UgpE) and a solute-binding protein (UgpB).

It is found in the cell inner membrane. It catalyses the reaction sn-glycerol 3-phosphate(out) + ATP + H2O = sn-glycerol 3-phosphate(in) + ADP + phosphate + H(+). Functionally, part of the ABC transporter complex UgpBAEC involved in sn-glycerol-3-phosphate (G3P) import. Responsible for energy coupling to the transport system. The protein is sn-glycerol-3-phosphate import ATP-binding protein UgpC of Rhodopseudomonas palustris (strain BisB5).